The primary structure comprises 345 residues: Histidinol-phosphate aminotransferase (345 aa).

Lys206 bears the N6-(pyridoxal phosphate)lysine mark.

This sequence belongs to the class-II pyridoxal-phosphate-dependent aminotransferase family. Histidinol-phosphate aminotransferase subfamily. Homodimer. Pyridoxal 5'-phosphate is required as a cofactor.

The enzyme catalyses L-histidinol phosphate + 2-oxoglutarate = 3-(imidazol-4-yl)-2-oxopropyl phosphate + L-glutamate. It participates in amino-acid biosynthesis; L-histidine biosynthesis; L-histidine from 5-phospho-alpha-D-ribose 1-diphosphate: step 7/9. The polypeptide is Histidinol-phosphate aminotransferase (Bacteroides fragilis (strain YCH46)).